We begin with the raw amino-acid sequence, 354 residues long: UDP-glucose 4-epimerase 1 (354 aa).

An NAD(+)-binding site is contributed by 8–39 (TILVTGGAGYIGSHTVLQLLQLGFRVVVLDNL). Substrate is bound at residue serine 133. The active-site Proton acceptor is tyrosine 157.

Belongs to the NAD(P)-dependent epimerase/dehydratase family. Requires NAD(+) as cofactor.

The enzyme catalyses UDP-alpha-D-glucose = UDP-alpha-D-galactose. It functions in the pathway carbohydrate metabolism; galactose metabolism. Catalyzes the interconversion between UDP-glucose and UDP-galactose. In Oryza sativa subsp. japonica (Rice), this protein is UDP-glucose 4-epimerase 1 (UGE-1).